Consider the following 641-residue polypeptide: Probable ATP-dependent helicase YpvA (641 aa).

Residues 29–303 (YDILPEKGFD…EFAELIEDAL (275 aa)) form the Helicase ATP-binding domain. Residue 64-71 (AGVGTGKT) participates in ATP binding. [4Fe-4S] cluster-binding residues include C133, C197, C200, and C206. Positions 257–260 (DEGH) match the DEGH box motif.

This sequence belongs to the helicase family. DinG subfamily. It depends on [4Fe-4S] cluster as a cofactor.

The enzyme catalyses Couples ATP hydrolysis with the unwinding of duplex DNA at the replication fork by translocating in the 5'-3' direction. This creates two antiparallel DNA single strands (ssDNA). The leading ssDNA polymer is the template for DNA polymerase III holoenzyme which synthesizes a continuous strand.. It carries out the reaction ATP + H2O = ADP + phosphate + H(+). Functionally, might be a 5'-3' DNA helicase. The chain is Probable ATP-dependent helicase YpvA (ypvA) from Bacillus subtilis (strain 168).